The following is a 748-amino-acid chain: Methylmalonyl-CoA mutase, mitochondrial (748 aa).

A mitochondrion-targeting transit peptide spans 1 to 30 (MLRAKNQLFLLSPHYLKQLNIPSASRWKRL). Malonyl-CoA is bound at residue Gln-48. Lys-87 bears the N6-acetyllysine mark. Malonyl-CoA is bound by residues 94–97 (YPTM) and 104–108 (TIRQY). Lys-210 is subject to N6-acetyllysine. Residues 214–216 (TIQ), Arg-226, Lys-253, His-263, and 302–304 (RLS) each bind malonyl-CoA. Lys-333 is subject to N6-acetyllysine. Lys-341 carries the N6-succinyllysine modification. At Ser-479 the chain carries Phosphoserine. The residue at position 593 (Lys-593) is an N6-succinyllysine. Residue Lys-600 is modified to N6-acetyllysine. The B12-binding domain maps to 612-744 (RPRLLVAKMG…DDIEKCLAEK (133 aa)). His-625 lines the adenosylcob(III)alamin pocket.

The protein belongs to the methylmalonyl-CoA mutase family. As to quaternary structure, homodimer. Interacts (the apoenzyme form) with MMAA; the interaction is GTP dependent. Adenosylcob(III)alamin is required as a cofactor.

The protein resides in the mitochondrion matrix. It localises to the mitochondrion. It is found in the cytoplasm. The enzyme catalyses (R)-methylmalonyl-CoA = succinyl-CoA. Inhibited by itaconyl-CoA, a metabolite that inactivates the coenzyme B12 cofactor. Its function is as follows. Catalyzes the reversible isomerization of methylmalonyl-CoA (MMCoA) (generated from branched-chain amino acid metabolism and degradation of dietary odd chain fatty acids and cholesterol) to succinyl-CoA (3-carboxypropionyl-CoA), a key intermediate of the tricarboxylic acid cycle. This Mus musculus (Mouse) protein is Methylmalonyl-CoA mutase, mitochondrial (Mmut).